The sequence spans 330 residues: Ketol-acid reductoisomerase (NADP(+)) (330 aa).

Positions 1 to 182 (MAVVYYDQDA…GATRAGVIET (182 aa)) constitute a KARI N-terminal Rossmann domain. NADP(+)-binding positions include 25–28 (YGSQ), R48, S51, S53, and 83–86 (DETQ). H108 is a catalytic residue. G134 contributes to the NADP(+) binding site. Residues 183 to 328 (TFKEETETDL…DQLREMMSWL (146 aa)) enclose the KARI C-terminal knotted domain. Residues D191, E195, E227, and E231 each contribute to the Mg(2+) site. S252 lines the substrate pocket.

It belongs to the ketol-acid reductoisomerase family. Requires Mg(2+) as cofactor.

It carries out the reaction (2R)-2,3-dihydroxy-3-methylbutanoate + NADP(+) = (2S)-2-acetolactate + NADPH + H(+). The enzyme catalyses (2R,3R)-2,3-dihydroxy-3-methylpentanoate + NADP(+) = (S)-2-ethyl-2-hydroxy-3-oxobutanoate + NADPH + H(+). Its pathway is amino-acid biosynthesis; L-isoleucine biosynthesis; L-isoleucine from 2-oxobutanoate: step 2/4. The protein operates within amino-acid biosynthesis; L-valine biosynthesis; L-valine from pyruvate: step 2/4. Involved in the biosynthesis of branched-chain amino acids (BCAA). Catalyzes an alkyl-migration followed by a ketol-acid reduction of (S)-2-acetolactate (S2AL) to yield (R)-2,3-dihydroxy-isovalerate. In the isomerase reaction, S2AL is rearranged via a Mg-dependent methyl migration to produce 3-hydroxy-3-methyl-2-ketobutyrate (HMKB). In the reductase reaction, this 2-ketoacid undergoes a metal-dependent reduction by NADPH to yield (R)-2,3-dihydroxy-isovalerate. The sequence is that of Ketol-acid reductoisomerase (NADP(+)) from Moorella thermoacetica (strain ATCC 39073 / JCM 9320).